The primary structure comprises 603 residues: Serine/threonine-protein kinase PLK1 (603 aa).

Residues 1-35 (MSAAVTAGKLARAPADPGKAGVPGVAAPGAPAAAP) form a disordered region. Position 2 is an N-acetylserine (serine 2). The residue at position 6 (threonine 6) is a Phosphothreonine. Over residues 13–35 (APADPGKAGVPGVAAPGAPAAAP) the composition is skewed to low complexity. Lysine 19 is covalently cross-linked (Glycyl lysine isopeptide (Lys-Gly) (interchain with G-Cter in ubiquitin)). In terms of domain architecture, Protein kinase spans 53-305 (YVRGRFLGKG…INELLNDEFF (253 aa)). ATP is bound by residues 59–67 (LGKGGFAKC) and lysine 82. Residue serine 103 is modified to Phosphoserine. Glutamate 131 contributes to the ATP binding site. Serine 137 carries the post-translational modification Phosphoserine. Catalysis depends on aspartate 176, which acts as the Proton acceptor. ATP is bound by residues 178–181 (KLGN) and aspartate 194. The tract at residues 194–221 (DFGLATKVEYDGERKKTLCGTPNYIAPE) is activation loop. Position 210 is a phosphothreonine; by AURKA (threonine 210). Threonine 214 carries the phosphothreonine modification. A Phosphoserine; by autocatalysis modification is found at serine 269. Residue serine 335 is modified to Phosphoserine. The D-box that targets the protein for proteasomal degradation in anaphase motif lies at 337–340 (RKPL). Residue lysine 338 forms a Glycyl lysine isopeptide (Lys-Gly) (interchain with G-Cter in SUMO2) linkage. Residues 338–364 (KPLTVLNKGLENPLPERPREKEEPVVR) form a disordered region. Basic and acidic residues predominate over residues 351–364 (LPERPREKEEPVVR). Serine 375 and serine 450 each carry phosphoserine. The region spanning 410–488 (WVSKWVDYSD…LKYFRNYMSE (79 aa)) is the POLO box 1 domain. Lysine 492 participates in a covalent cross-link: Glycyl lysine isopeptide (Lys-Gly) (interchain with G-Cter in ubiquitin). The segment at 493 to 507 (AGANITPREGDELAR) is linker. A Phosphothreonine modification is found at threonine 498. The POLO box 2 domain maps to 510 to 592 (YLRTWFRTRS…ARTMVDKLLS (83 aa)). Residues 538 to 540 (HTK) are important for interaction with phosphorylated proteins.

The protein belongs to the protein kinase superfamily. Ser/Thr protein kinase family. CDC5/Polo subfamily. In terms of assembly, interacts with CEP170. Interacts with EVI5. Interacts with FAM29A. Interacts with SLX4/BTBD12. Interacts with TTDN1. Interacts (via POLO-box domain) with the phosphorylated form of BUB1, CDC25C and CENPU. Interacts with KIF2A. Interacts with CYLD. Part of an astrin (SPAG5)-kinastrin (SKAP) complex containing KNSTRN, SPAG5, PLK1, DYNLL1 and SGO2. Interacts with BIRC6/bruce. Interacts with CDK1-phosphorylated FRY; this interaction occurs in mitotic cells, but not in interphase cells. FRY interaction facilitates AURKA-mediated PLK1 phosphorylation. Interacts with CDK1-phosphorylated DCTN6 during mitotic prometaphase; the interaction facilitates recruitment to kinetochores. Interacts with CEP68; the interaction phosphorylates CEP68. Interacts (via POLO-box domain) with DCTN1. Interacts with CEP20 in later G1, S, G2 and M phases of the cell cycle; this interaction recruits PLK1 to centrosomes, a step required for S phase progression. Interacts with KLHL22. Interacts (via POLO box domains) with NEDD9/HEF1 (via C-terminus). Interacts with FIRRM (via N-terminus region); required for maintaining, but not activating, PLK1 kinase activity. Interacts with FZR1. Interacts with SKA3; the interaction promotes the stability of PLK1; the interaction promotes the stability of PLK1. Interacts with the MTMR3:MTMR4 heterooligomer; brings CEP55 and PLK1 together during early mitosis, regulating the phosphorylation of CEP55 by PLK1 and its recruitment to the midbody where it can mediate cell abscission. Catalytic activity is enhanced by phosphorylation of Thr-210. Phosphorylation at Thr-210 is first detected on centrosomes in the G2 phase of the cell cycle, peaks in prometaphase and gradually disappears from centrosomes during anaphase. Dephosphorylation at Thr-210 at centrosomes is probably mediated by protein phosphatase 1C (PP1C), via interaction with PPP1R12A/MYPT1. Autophosphorylation and phosphorylation of Ser-137 may not be significant for the activation of PLK1 during mitosis, but may enhance catalytic activity during recovery after DNA damage checkpoint. Phosphorylated in vitro by STK10. In terms of processing, ubiquitinated by the anaphase promoting complex/cyclosome (APC/C) in anaphase and following DNA damage, leading to its degradation by the proteasome. Ubiquitination is mediated via its interaction with FZR1/CDH1. Ubiquitination and subsequent degradation prevents entry into mitosis and is essential to maintain an efficient G2 DNA damage checkpoint. Monoubiquitination at Lys-492 by the BCR(KLHL22) ubiquitin ligase complex does not lead to degradation: it promotes PLK1 dissociation from phosphoreceptor proteins and subsequent removal from kinetochores, allowing silencing of the spindle assembly checkpoint (SAC) and chromosome segregation. In terms of tissue distribution, placenta and colon.

The protein localises to the nucleus. Its subcellular location is the chromosome. The protein resides in the centromere. It localises to the kinetochore. It is found in the cytoplasm. The protein localises to the cytoskeleton. Its subcellular location is the microtubule organizing center. The protein resides in the centrosome. It localises to the spindle. It is found in the midbody. It carries out the reaction L-seryl-[protein] + ATP = O-phospho-L-seryl-[protein] + ADP + H(+). It catalyses the reaction L-threonyl-[protein] + ATP = O-phospho-L-threonyl-[protein] + ADP + H(+). Activated by phosphorylation of Thr-210 by AURKA; phosphorylation by AURKA is enhanced by BORA. Once activated, activity is stimulated by binding target proteins. Binding of target proteins has no effect on the non-activated kinase. Several inhibitors targeting PLKs are currently in development and are under investigation in a growing number of clinical trials, such as BI 2536, an ATP-competitive PLK1 inhibitor or BI 6727, a dihydropteridinone that specifically inhibits the catalytic activity of PLK1. Functionally, serine/threonine-protein kinase that performs several important functions throughout M phase of the cell cycle, including the regulation of centrosome maturation and spindle assembly, the removal of cohesins from chromosome arms, the inactivation of anaphase-promoting complex/cyclosome (APC/C) inhibitors, and the regulation of mitotic exit and cytokinesis. Polo-like kinase proteins act by binding and phosphorylating proteins that are already phosphorylated on a specific motif recognized by the POLO box domains. Phosphorylates BORA, BUB1B/BUBR1, CCNB1, CDC25C, CEP55, ECT2, ERCC6L, FBXO5/EMI1, FOXM1, KIF20A/MKLP2, CENPU, NEDD1, NINL, NPM1, NUDC, PKMYT1/MYT1, KIZ, MRE11, PPP1R12A/MYPT1, POLQ, PRC1, RACGAP1/CYK4, RAD51, RHNO1, SGO1, STAG2/SA2, TEX14, TOPORS, p73/TP73, TPT1, WEE1 and HNRNPU. Plays a key role in centrosome functions and the assembly of bipolar spindles by phosphorylating KIZ, NEDD1 and NINL. NEDD1 phosphorylation promotes subsequent targeting of the gamma-tubulin ring complex (gTuRC) to the centrosome, an important step for spindle formation. Phosphorylation of NINL component of the centrosome leads to NINL dissociation from other centrosomal proteins. Involved in mitosis exit and cytokinesis by phosphorylating CEP55, ECT2, KIF20A/MKLP2, CENPU, PRC1 and RACGAP1. Recruited at the central spindle by phosphorylating and docking PRC1 and KIF20A/MKLP2; creates its own docking sites on PRC1 and KIF20A/MKLP2 by mediating phosphorylation of sites subsequently recognized by the POLO box domains. Phosphorylates RACGAP1, thereby creating a docking site for the Rho GTP exchange factor ECT2 that is essential for the cleavage furrow formation. Promotes the central spindle recruitment of ECT2. Plays a central role in G2/M transition of mitotic cell cycle by phosphorylating CCNB1, CDC25C, FOXM1, CENPU, PKMYT1/MYT1, PPP1R12A/MYPT1 and WEE1. Part of a regulatory circuit that promotes the activation of CDK1 by phosphorylating the positive regulator CDC25C and inhibiting the negative regulators WEE1 and PKMYT1/MYT1. Also acts by mediating phosphorylation of cyclin-B1 (CCNB1) on centrosomes in prophase. Phosphorylates FOXM1, a key mitotic transcription regulator, leading to enhance FOXM1 transcriptional activity. Involved in kinetochore functions and sister chromatid cohesion by phosphorylating BUB1B/BUBR1, FBXO5/EMI1 and STAG2/SA2. PLK1 is high on non-attached kinetochores suggesting a role of PLK1 in kinetochore attachment or in spindle assembly checkpoint (SAC) regulation. Required for kinetochore localization of BUB1B. Regulates the dissociation of cohesin from chromosomes by phosphorylating cohesin subunits such as STAG2/SA2. Phosphorylates SGO1: required for spindle pole localization of isoform 3 of SGO1 and plays a role in regulating its centriole cohesion function. Mediates phosphorylation of FBXO5/EMI1, a negative regulator of the APC/C complex during prophase, leading to FBXO5/EMI1 ubiquitination and degradation by the proteasome. Acts as a negative regulator of p53 family members: phosphorylates TOPORS, leading to inhibit the sumoylation of p53/TP53 and simultaneously enhance the ubiquitination and subsequent degradation of p53/TP53. Phosphorylates the transactivation domain of the transcription factor p73/TP73, leading to inhibit p73/TP73-mediated transcriptional activation and pro-apoptotic functions. Phosphorylates BORA, and thereby promotes the degradation of BORA. Contributes to the regulation of AURKA function. Also required for recovery after DNA damage checkpoint and entry into mitosis. Phosphorylates MISP, leading to stabilization of cortical and astral microtubule attachments required for proper spindle positioning. Together with MEIKIN, acts as a regulator of kinetochore function during meiosis I: required both for mono-orientation of kinetochores on sister chromosomes and protection of centromeric cohesin from separase-mediated cleavage. Phosphorylates CEP68 and is required for its degradation. Regulates nuclear envelope breakdown during prophase by phosphorylating DCTN1 resulting in its localization in the nuclear envelope. Phosphorylates the heat shock transcription factor HSF1, promoting HSF1 nuclear translocation upon heat shock. Phosphorylates HSF1 also in the early mitotic period; this phosphorylation regulates HSF1 localization to the spindle pole, the recruitment of the SCF(BTRC) ubiquitin ligase complex induicing HSF1 degradation, and hence mitotic progression. Regulates mitotic progression by phosphorylating RIOK2. Through the phosphorylation of DZIP1 regulates the localization during mitosis of the BBSome, a ciliary protein complex involved in cilium biogenesis. Regulates DNA repair during mitosis by mediating phosphorylation of POLQ and RHNO1, thereby promoting POLQ recruitment to DNA damage sites. Phosphorylates ATXN10 which may play a role in the regulation of cytokinesis and may stimulate the proteasome-mediated degradation of ATXN10. The polypeptide is Serine/threonine-protein kinase PLK1 (PLK1) (Homo sapiens (Human)).